The sequence spans 132 residues: Small ribosomal subunit protein uS11 (132 aa).

It belongs to the universal ribosomal protein uS11 family. As to quaternary structure, part of the 30S ribosomal subunit. Interacts with proteins S7 and S18. Binds to IF-3.

Located on the platform of the 30S subunit, it bridges several disparate RNA helices of the 16S rRNA. Forms part of the Shine-Dalgarno cleft in the 70S ribosome. This Lachnoclostridium phytofermentans (strain ATCC 700394 / DSM 18823 / ISDg) (Clostridium phytofermentans) protein is Small ribosomal subunit protein uS11.